A 622-amino-acid chain; its full sequence is FERM domain-containing protein 6 (622 aa).

The FERM domain occupies 16-328; sequence RRVCIFLPND…NSHRLYMNLQ (313 aa). The segment at 357-452 is disordered; that stretch reads LDMDPLEKRS…KDRLEEDSQD (96 aa). 2 stretches are compositionally biased toward low complexity: residues 384 to 395 and 425 to 438; these read HSTASHSSSHTS and SSMTSHGSSHTSGV. S522 is subject to Phosphoserine. Position 523 is a phosphothreonine (T523). Phosphoserine occurs at positions 525, 542, and 544.

It is found in the cytoplasm. It localises to the cell membrane. The protein is FERM domain-containing protein 6 (Frmd6) of Mus musculus (Mouse).